The following is a 288-amino-acid chain: Protease HtpX homolog (288 aa).

The next 2 membrane-spanning stretches (helical) occupy residues 7–27 (TAVL…MLGG) and 29–49 (QGML…YWFS). Residue His131 coordinates Zn(2+). The active site involves Glu132. Residue His135 participates in Zn(2+) binding. 2 helical membrane passes run 141–161 (ILIS…ANFA) and 177–197 (IASL…QMSI). Glu202 lines the Zn(2+) pocket.

It belongs to the peptidase M48B family. Requires Zn(2+) as cofactor.

It is found in the cell inner membrane. The protein is Protease HtpX homolog of Polynucleobacter necessarius subsp. necessarius (strain STIR1).